Here is a 255-residue protein sequence, read N- to C-terminus: Hydroxyacylglutathione hydrolase (255 aa).

Residues His59, His61, Asp63, His64, His118, Asp144, and His182 each contribute to the Zn(2+) site.

This sequence belongs to the metallo-beta-lactamase superfamily. Glyoxalase II family. In terms of assembly, monomer. It depends on Zn(2+) as a cofactor.

The enzyme catalyses an S-(2-hydroxyacyl)glutathione + H2O = a 2-hydroxy carboxylate + glutathione + H(+). It participates in secondary metabolite metabolism; methylglyoxal degradation; (R)-lactate from methylglyoxal: step 2/2. Its function is as follows. Thiolesterase that catalyzes the hydrolysis of S-D-lactoyl-glutathione to form glutathione and D-lactic acid. In Synechococcus sp. (strain WH7803), this protein is Hydroxyacylglutathione hydrolase.